An 879-amino-acid polypeptide reads, in one-letter code: Valine--tRNA ligase (879 aa).

The 'HIGH' region signature appears at 45 to 55 (PNVTGKLHLGH). The 'KMSKS' region signature appears at 521–525 (KMSKS). K524 contributes to the ATP binding site. Residues 806-879 (LTELVNVDEE…ERMKELKESK (74 aa)) are a coiled coil.

It belongs to the class-I aminoacyl-tRNA synthetase family. ValS type 1 subfamily. As to quaternary structure, monomer.

It localises to the cytoplasm. It carries out the reaction tRNA(Val) + L-valine + ATP = L-valyl-tRNA(Val) + AMP + diphosphate. Catalyzes the attachment of valine to tRNA(Val). As ValRS can inadvertently accommodate and process structurally similar amino acids such as threonine, to avoid such errors, it has a 'posttransfer' editing activity that hydrolyzes mischarged Thr-tRNA(Val) in a tRNA-dependent manner. The sequence is that of Valine--tRNA ligase from Lactobacillus johnsonii (strain CNCM I-12250 / La1 / NCC 533).